The primary structure comprises 135 residues: Cytochrome c-type biogenesis protein CcmE (135 aa).

The Cytoplasmic portion of the chain corresponds to 1-8; it reads MLLLRWKR. A helical; Signal-anchor for type II membrane protein transmembrane segment spans residues 9–29; sequence FWFLSLGILLFSGVVSLMLFN. Residues 30–135 lie on the Periplasmic side of the membrane; that stretch reads LSESISFFYL…EDFIKSVRGE (106 aa). Heme-binding residues include H118 and Y122.

It belongs to the CcmE/CycJ family.

Its subcellular location is the cell inner membrane. In terms of biological role, heme chaperone required for the biogenesis of c-type cytochromes. Transiently binds heme delivered by CcmC and transfers the heme to apo-cytochromes in a process facilitated by CcmF and CcmH. This chain is Cytochrome c-type biogenesis protein CcmE, found in Neorickettsia sennetsu (strain ATCC VR-367 / Miyayama) (Ehrlichia sennetsu).